The following is a 525-amino-acid chain: Peptide chain release factor 3 (525 aa).

A tr-type G domain is found at 11–279 (DKRRTFAIIS…TYLEYAPQPA (269 aa)). Residues 20–27 (SHPDAGKT), 88–92 (DTPGH), and 142–145 (NKLD) contribute to the GTP site.

It belongs to the TRAFAC class translation factor GTPase superfamily. Classic translation factor GTPase family. PrfC subfamily.

The protein localises to the cytoplasm. Increases the formation of ribosomal termination complexes and stimulates activities of RF-1 and RF-2. It binds guanine nucleotides and has strong preference for UGA stop codons. It may interact directly with the ribosome. The stimulation of RF-1 and RF-2 is significantly reduced by GTP and GDP, but not by GMP. The sequence is that of Peptide chain release factor 3 from Levilactobacillus brevis (strain ATCC 367 / BCRC 12310 / CIP 105137 / JCM 1170 / LMG 11437 / NCIMB 947 / NCTC 947) (Lactobacillus brevis).